Here is a 131-residue protein sequence, read N- to C-terminus: MKAVSPVRPQSRKAQVPSVCGELALHCLSEHSLGVARYKMEEEETLCLQYDMNDCYSRLKRLVPTIPPNKKVSKVEILQHVIDYILDLQLALDTHPVLLRQQPPTRTPLTDLNTDPAALVVNKQGDSILCR.

A bHLH domain is found at 36–88; that stretch reads ARYKMEEEETLCLQYDMNDCYSRLKRLVPTIPPNKKVSKVEILQHVIDYILDL.

As to quaternary structure, heterodimer with other HLH proteins. In terms of tissue distribution, during embryonic development, expressed in a number of neural tissues, including Rohon-Beard neurons, olfactory placode, eye primordia, and the trigeminal ganglia. Also expressed in other organs including the pronephros and liver primordium. Pronephric development begins by stage 25 and increases during tailbud stages. Expressed in both the tubules and the duct. As embryogenesis progresses, expressed in the migrating melanocytes and lateral line structures.

It is found in the nucleus. Its function is as follows. Transcriptional regulator (lacking a basic DNA binding domain) which negatively regulates the basic helix-loop-helix (bHLH) transcription factors by forming heterodimers and inhibiting their DNA binding and transcriptional activity. Inhibits the activity of both neurogenic (neurog1/neurogenin, neurod1/neuroD) and myogenic (myod1/myoD) bHLH factors. In Xenopus laevis (African clawed frog), this protein is DNA-binding protein inhibitor ID-4.